We begin with the raw amino-acid sequence, 716 residues long: Fatty acid oxidation complex subunit alpha (716 aa).

The segment at 1-189 (MIYQSPTIQV…KVGAIDAVVA (189 aa)) is enoyl-CoA hydratase/isomerase. Asp-296 contributes to the substrate binding site. Residues 311–716 (KNIDTAAVLG…AANNGSYYQS (406 aa)) are 3-hydroxyacyl-CoA dehydrogenase. NAD(+)-binding positions include Met-324, Asp-343, 400 to 402 (VVE), Lys-407, and Ser-429. The active-site For 3-hydroxyacyl-CoA dehydrogenase activity is His-450. NAD(+) is bound at residue Asn-453. Asn-500 serves as a coordination point for substrate.

This sequence in the N-terminal section; belongs to the enoyl-CoA hydratase/isomerase family. The protein in the C-terminal section; belongs to the 3-hydroxyacyl-CoA dehydrogenase family. As to quaternary structure, heterotetramer of two alpha chains (FadB) and two beta chains (FadA).

The catalysed reaction is a (3S)-3-hydroxyacyl-CoA + NAD(+) = a 3-oxoacyl-CoA + NADH + H(+). The enzyme catalyses a (3S)-3-hydroxyacyl-CoA = a (2E)-enoyl-CoA + H2O. It catalyses the reaction a 4-saturated-(3S)-3-hydroxyacyl-CoA = a (3E)-enoyl-CoA + H2O. It carries out the reaction (3S)-3-hydroxybutanoyl-CoA = (3R)-3-hydroxybutanoyl-CoA. The catalysed reaction is a (3Z)-enoyl-CoA = a 4-saturated (2E)-enoyl-CoA. The enzyme catalyses a (3E)-enoyl-CoA = a 4-saturated (2E)-enoyl-CoA. It functions in the pathway lipid metabolism; fatty acid beta-oxidation. Functionally, involved in the aerobic and anaerobic degradation of long-chain fatty acids via beta-oxidation cycle. Catalyzes the formation of 3-oxoacyl-CoA from enoyl-CoA via L-3-hydroxyacyl-CoA. It can also use D-3-hydroxyacyl-CoA and cis-3-enoyl-CoA as substrate. This is Fatty acid oxidation complex subunit alpha from Shewanella sediminis (strain HAW-EB3).